The primary structure comprises 365 residues: Peptide chain release factor 2 (365 aa).

Q251 carries the post-translational modification N5-methylglutamine.

It belongs to the prokaryotic/mitochondrial release factor family. In terms of processing, methylated by PrmC. Methylation increases the termination efficiency of RF2.

The protein localises to the cytoplasm. Functionally, peptide chain release factor 2 directs the termination of translation in response to the peptide chain termination codons UGA and UAA. The protein is Peptide chain release factor 2 of Campylobacter jejuni subsp. jejuni serotype O:2 (strain ATCC 700819 / NCTC 11168).